The primary structure comprises 230 residues: MNDADNDGSVVALVPAAGRGVRLGEKSPKAFVPVGGTPMVRLAVDGLLAAGVVDRIIVMVPAEWVESAVALLPPSEVVRVVVGGAERTDSVRAGLAAAPDAGYFLVHDAARALTPPALIGRIVGELRAGRRAVVPALPVVDTVKSVDAAGVVTGTPDRAALRAVQTPQGFTADLLRAAYAADVPATDDAGLVERLGEPVHTVAGDPLAFKITTPLDLRLAETLLDRRAAL.

It belongs to the IspD/TarI cytidylyltransferase family. IspD subfamily.

It carries out the reaction 2-C-methyl-D-erythritol 4-phosphate + CTP + H(+) = 4-CDP-2-C-methyl-D-erythritol + diphosphate. The protein operates within isoprenoid biosynthesis; isopentenyl diphosphate biosynthesis via DXP pathway; isopentenyl diphosphate from 1-deoxy-D-xylulose 5-phosphate: step 2/6. In terms of biological role, catalyzes the formation of 4-diphosphocytidyl-2-C-methyl-D-erythritol from CTP and 2-C-methyl-D-erythritol 4-phosphate (MEP). In Nocardia farcinica (strain IFM 10152), this protein is 2-C-methyl-D-erythritol 4-phosphate cytidylyltransferase.